A 178-amino-acid chain; its full sequence is Photosystem I assembly protein Ycf4 (178 aa).

2 consecutive transmembrane segments (helical) span residues 19-39 (ILVAAMVTIGGVGFLFASLSS) and 61-81 (LVMGLYSIAAALLATYLWAVI).

It belongs to the Ycf4 family.

It localises to the cellular thylakoid membrane. Functionally, seems to be required for the assembly of the photosystem I complex. The sequence is that of Photosystem I assembly protein Ycf4 from Synechococcus sp. (strain WH7803).